The sequence spans 147 residues: Hemoglobin subunit beta (147 aa).

The 145-residue stretch at 3-147 folds into the Globin domain; it reads HWSCEEKQFI…VAHALALGYH (145 aa). The heme b site is built by histidine 64 and histidine 93.

This sequence belongs to the globin family. Heterotetramer of two alpha-D chains and two beta chains. Red blood cells.

Functionally, involved in oxygen transport from the lung to the various peripheral tissues. This is Hemoglobin subunit beta (HBB) from Chelonoidis carbonarius (Red-footed tortoise).